The following is a 221-amino-acid chain: Large ribosomal subunit protein uL3 (221 aa).

It belongs to the universal ribosomal protein uL3 family. Part of the 50S ribosomal subunit. Forms a cluster with proteins L14 and L19.

In terms of biological role, one of the primary rRNA binding proteins, it binds directly near the 3'-end of the 23S rRNA, where it nucleates assembly of the 50S subunit. This is Large ribosomal subunit protein uL3 from Nocardia farcinica (strain IFM 10152).